A 772-amino-acid polypeptide reads, in one-letter code: Hyperosmolality-gated Ca2+ permeable channel 1.1 (772 aa).

Over 1-5 the chain is Extracellular; that stretch reads MATLK. A helical transmembrane segment spans residues 6–28; that stretch reads DIGVSAGINILTAFIFFIIFAFL. The Cytoplasmic portion of the chain corresponds to 29 to 100; it reads RLQPFNDRVY…AGLDSVVYLR (72 aa). The helical transmembrane segment at 101-122 threads the bilayer; that stretch reads IYWLGLKIFAPIAMLAWAVLVP. Residues 123-159 are Extracellular-facing; that stretch reads VNWTNNELELAKHFKNVTSSDIDKLTISNIPEGSNRF. A glycan (N-linked (GlcNAc) asparagine) is linked at Asn138. The helical transmembrane segment at 160–180 threads the bilayer; it reads WAHIIMAYAFTIWTCYMLMKE. The Cytoplasmic portion of the chain corresponds to 181–372; it reads YETVANMRLQ…PNLAIPYVSL (192 aa). Residues 339–344 are cytoplasmic region required for homodimerization; it reads QTTQTR. A helical transmembrane segment spans residues 373–398; it reads TVRRLVMNVAFFFLTFFFIIPIAFVQ. Over 399 to 424 the chain is Extracellular; the sequence is SLATIEGIEKVAPFLKVIIEKDFIKS. A helical membrane pass occupies residues 425–450; sequence LIQGLLAGIALKLFLIFLPAILMTMS. The Cytoplasmic segment spans residues 451–461; it reads KFEGFTSVSFL. A helical membrane pass occupies residues 462–485; sequence ERRSASRYYIFNLVNVFLGSVIAG. Over 486–509 the chain is Extracellular; the sequence is AAFEQLNSFLNQSPNQIPKTIGMA. Residues 510–538 form a helical membrane-spanning segment; the sequence is IPMKATFFITYIMVDGWAGVAGEILMLKP. Topologically, residues 539 to 566 are cytoplasmic; the sequence is LIIYHLKNAFLVKTEKDREEAMNPGSIG. A helical transmembrane segment spans residues 567–587; that stretch reads FNTGEPQIQLYFLLGLVYAPV. Position 588 (Thr588) is a topological domain, extracellular. Residues 589–606 form a helical membrane-spanning segment; it reads PMLLPFILVFFALAYVVY. Over 607–624 the chain is Cytoplasmic; it reads RHQIINVYNQEYESAAAF. The helical transmembrane segment at 625–647 threads the bilayer; the sequence is WPDVHGRVITALIISQLLLMGLL. Residues 648-653 are Extracellular-facing; that stretch reads GTKHAA. Residues 654-674 traverse the membrane as a helical segment; the sequence is SAAPFLIALPVITIGFHRFCK. Over 675 to 772 the chain is Cytoplasmic; the sequence is GRFEPAFVRY…SLAVINGKEV (98 aa). A cytoplasmic region required for homodimerization region spans residues 686 to 688; the sequence is LQE. The tract at residues 743–772 is disordered; that stretch reads KRQSRRNTPAPSRISGESSPSLAVINGKEV. Residues 748-763 are compositionally biased toward polar residues; that stretch reads RNTPAPSRISGESSPS.

The protein belongs to the CSC1 (TC 1.A.17) family. In terms of assembly, homodimer. As to expression, expressed in leaves, flowers, roots and guard cells.

It is found in the cell membrane. Its activity is regulated as follows. Activated by mechanical pressure. Acts as a hyperosmolarity-gated non-selective cation channel that permeates Ca(2+) ions. Shows the following permeability sequence: K(+) &gt; Ba(2+) = Ca(2+) &gt; Na(+) = Mg(2+) = Cs(+). Mechanosensitive ion channel that converts mechanical stimuli into a flow of ions: activated in response to membrane stretch and poke. The polypeptide is Hyperosmolality-gated Ca2+ permeable channel 1.1 (Arabidopsis thaliana (Mouse-ear cress)).